The primary structure comprises 54 residues: Ferredoxin (54 aa).

4Fe-4S ferredoxin-type domains follow at residues 2 to 28 (HVIS…EGET) and 29 to 54 (KYVV…ISAE). Residues C8, C11, C14, C18, C36, C39, C42, and C46 each coordinate [4Fe-4S] cluster.

The cofactor is [4Fe-4S] cluster.

In terms of biological role, ferredoxins are iron-sulfur proteins that transfer electrons in a wide variety of metabolic reactions. The protein is Ferredoxin of Megasphaera elsdenii.